The chain runs to 133 residues: Small ribosomal subunit protein uS9 (133 aa).

The interval 101–133 (MKPKGLLTRDPREVERKKYGLKKARRAPQFSKR) is disordered. A compositionally biased stretch (basic and acidic residues) spans 107 to 118 (LTRDPREVERKK). The span at 119-133 (YGLKKARRAPQFSKR) shows a compositional bias: basic residues.

Belongs to the universal ribosomal protein uS9 family.

The sequence is that of Small ribosomal subunit protein uS9 from Deinococcus radiodurans (strain ATCC 13939 / DSM 20539 / JCM 16871 / CCUG 27074 / LMG 4051 / NBRC 15346 / NCIMB 9279 / VKM B-1422 / R1).